We begin with the raw amino-acid sequence, 217 residues long: Large ribosomal subunit protein uL3 (217 aa).

A disordered region spans residues 135–154 (ATHGNSLSHRAPGSIGQCQT). N5-methylglutamine is present on glutamine 153.

It belongs to the universal ribosomal protein uL3 family. Part of the 50S ribosomal subunit. Forms a cluster with proteins L14 and L19. In terms of processing, methylated by PrmB.

In terms of biological role, one of the primary rRNA binding proteins, it binds directly near the 3'-end of the 23S rRNA, where it nucleates assembly of the 50S subunit. This chain is Large ribosomal subunit protein uL3, found in Coxiella burnetii (strain CbuG_Q212) (Coxiella burnetii (strain Q212)).